A 1096-amino-acid polypeptide reads, in one-letter code: DNA-directed RNA polymerase subunit beta (1096 aa).

The protein belongs to the RNA polymerase beta chain family. In plastids the minimal PEP RNA polymerase catalytic core is composed of four subunits: alpha, beta, beta', and beta''. When a (nuclear-encoded) sigma factor is associated with the core the holoenzyme is formed, which can initiate transcription.

It localises to the plastid. It is found in the chloroplast. It catalyses the reaction RNA(n) + a ribonucleoside 5'-triphosphate = RNA(n+1) + diphosphate. Its function is as follows. DNA-dependent RNA polymerase catalyzes the transcription of DNA into RNA using the four ribonucleoside triphosphates as substrates. This is DNA-directed RNA polymerase subunit beta from Guillardia theta (Cryptophyte).